Reading from the N-terminus, the 274-residue chain is Tryptophan synthase alpha chain (274 aa).

Residues E49 and D60 each act as proton acceptor in the active site.

The protein belongs to the TrpA family. As to quaternary structure, tetramer of two alpha and two beta chains.

It carries out the reaction (1S,2R)-1-C-(indol-3-yl)glycerol 3-phosphate + L-serine = D-glyceraldehyde 3-phosphate + L-tryptophan + H2O. Its pathway is amino-acid biosynthesis; L-tryptophan biosynthesis; L-tryptophan from chorismate: step 5/5. The alpha subunit is responsible for the aldol cleavage of indoleglycerol phosphate to indole and glyceraldehyde 3-phosphate. In Zymomonas mobilis subsp. mobilis (strain ATCC 31821 / ZM4 / CP4), this protein is Tryptophan synthase alpha chain.